The sequence spans 150 residues: Ribonuclease K6 (150 aa).

Positions 1–23 (MVLCFPLLLLVLVLWGQVCPLHA) are cleaved as a signal peptide. The active-site Proton acceptor is His38. Intrachain disulfides connect Cys46/Cys104, Cys60/Cys114, Cys78/Cys129, and Cys85/Cys92. Asn55 carries N-linked (GlcNAc...) asparagine glycosylation. Substrate is bound by residues 61–65 (KPQNT) and Lys86. The N-linked (GlcNAc...) asparagine glycan is linked to Asn100. Arg105 serves as a coordination point for substrate. Residue His145 is the Proton donor of the active site.

The protein belongs to the pancreatic ribonuclease family. Interacts (via N-terminus) with bacterial lipopolysaccharide (LPS).

The protein localises to the secreted. It localises to the lysosome. The protein resides in the cytoplasmic granule. Its function is as follows. Ribonuclease which shows a preference for the pyrimidines uridine and cytosine. Has potent antibacterial activity against a range of Gram-positive and Gram-negative bacteria, including P.aeruginosa, A.baumanii, M.luteus, S.aureus, E.faecalis, E.faecium, S.saprophyticus and E.coli. Causes loss of bacterial membrane integrity, and also promotes agglutination of Gram-negative bacteria. Probably contributes to urinary tract sterility. Bactericidal activity is independent of RNase activity. This is Ribonuclease K6 (RNASE6) from Aotus trivirgatus (Three-striped night monkey).